Here is a 3142-residue protein sequence, read N- to C-terminus: Huntingtin (3142 aa).

Residues 3–13 are sufficient for interaction with TPR; sequence TLEKLMKAFES. N6-acetyllysine is present on lysine 9. Residues 14 to 85 form a disordered region; the sequence is LKSFQQQQQQ…PGPAVAEEPL (72 aa). Positions 18–37 are enriched in low complexity; that stretch reads QQQQQQQQQQQQQQQQQQQQ. Over residues 38–78 the composition is skewed to pro residues; sequence QPPPPPPPPPPPQLPQPPPQAQPLLPQPQPPPPPPPPPPGP. Lysine 176 and lysine 234 each carry N6-acetyllysine. 3 HEAT repeats span residues 204-241, 246-283, and 316-360; these read PYLVNLLPCLTRTSKRPEESVQETLAAAVPKIMASFGN, NEIKVLLKAFIANLKSSSPTIRRTAAGSAVSICQHSRR, and LTLR…VYEL. Lysine 343 is subject to N6-acetyllysine. A phosphoserine mark is found at serine 411, serine 417, serine 419, and serine 432. Lysine 442 carries the post-translational modification N6-acetyllysine. The interval 447–469 is disordered; that stretch reads EEEALEDDSESRSDVSSSALTAS. Positions 491–502 are interaction with ZDHHC17; that stretch reads GHDIITEQPRSQ. The segment at 517 to 583 is disordered; that stretch reads LTSSATDGDE…TPSDSSEIVL (67 aa). Residues 531–545 are compositionally biased toward low complexity; the sequence is SHSSSQVSAVPSDPA. Residues 550–579 are compositionally biased toward polar residues; the sequence is DGTQASSPISDSSQTTTEGPDSAVTPSDSS. Glycine 551 carries N-myristoyl glycine lipidation. 2 positions are modified to phosphoserine: serine 640 and serine 643. HEAT repeat units lie at residues 802–839 and 902–940; these read FSLADCIPLLRKTLKDESSVTCKLACTAVRNCVMSLCS and KLQERVLNNVVIHLLGDEDPRVRHVAAASLIRLVPKLFY. Residues 1176 to 1225 form a disordered region; that stretch reads PSLSPIRRKGKEKEPGEQASVPLSPKKGSEASAASRQSDTSGPVTTSKSS. Phosphoserine; by CDK5 occurs at positions 1179 and 1199. Polar residues predominate over residues 1207–1225; it reads SAASRQSDTSGPVTTSKSS. Serine 1870 and serine 1874 each carry phosphoserine. Positions 2330–2351 are disordered; sequence ERRTNTPKAISEEEEEVDPNTQ. The Nuclear export signal motif lies at 2395 to 2404; the sequence is IIISLARLPL. Positions 2633–2662 are disordered; the sequence is EEEWDEEEEEEADAPAPSSPPTSPVNSRKH. A compositionally biased stretch (acidic residues) spans 2634–2645; that stretch reads EEWDEEEEEEAD.

It belongs to the huntingtin family. As to quaternary structure, interacts with PFN1. Interacts through its N-terminus with PRPF40A. Interacts with PQBP1. Interacts with SETD2. Interacts with SH3GLB1. Interacts with SYVN. Interacts with TPR; the interaction is inhibited by forms of Huntingtin with expanded polyglutamine stretch. Interacts with ZDHHC13 (via ANK repeats). Interacts with ZDHHC17 (via ANK repeats). Interacts with F8A1/F8A2/F8A3. Found in a complex with F8A1/F8A2/F8A3, HTT and RAB5A; mediates the recruitment of HTT by RAB5A. Post-translationally, cleaved by caspases downstream of the polyglutamine stretch. The resulting N-terminal fragments are cytotoxic and provokes apoptosis. Forms with expanded polyglutamine expansion are specifically ubiquitinated by SYVN1, which promotes their proteasomal degradation. In terms of processing, phosphorylation at Ser-1179 and Ser-1199 by CDK5 in response to DNA damage in nuclei of neurons protects neurons against polyglutamine expansion as well as DNA damage mediated toxicity. Post-translationally, myristoylated at Gly-551, following proteolytic cleavage at Asp-550. Expressed in the brain cortex (at protein level). Widely expressed with the highest level of expression in the brain (nerve fibers, varicosities, and nerve endings). In the brain, the regions where it can be mainly found are the cerebellar cortex, the neocortex, the striatum, and the hippocampal formation.

Its subcellular location is the cytoplasm. The protein localises to the nucleus. It is found in the early endosome. The protein resides in the cytoplasmic vesicle. It localises to the autophagosome. May play a role in microtubule-mediated transport or vesicle function. In terms of biological role, promotes the formation of autophagic vesicles. In Homo sapiens (Human), this protein is Huntingtin (HTT).